A 370-amino-acid polypeptide reads, in one-letter code: 4-hydroxy-3-methylbut-2-en-1-yl diphosphate synthase (flavodoxin) (370 aa).

4 residues coordinate [4Fe-4S] cluster: Cys270, Cys273, Cys305, and Glu312.

The protein belongs to the IspG family. Requires [4Fe-4S] cluster as cofactor.

The catalysed reaction is (2E)-4-hydroxy-3-methylbut-2-enyl diphosphate + oxidized [flavodoxin] + H2O + 2 H(+) = 2-C-methyl-D-erythritol 2,4-cyclic diphosphate + reduced [flavodoxin]. It participates in isoprenoid biosynthesis; isopentenyl diphosphate biosynthesis via DXP pathway; isopentenyl diphosphate from 1-deoxy-D-xylulose 5-phosphate: step 5/6. Converts 2C-methyl-D-erythritol 2,4-cyclodiphosphate (ME-2,4cPP) into 1-hydroxy-2-methyl-2-(E)-butenyl 4-diphosphate. This Marinomonas sp. (strain MWYL1) protein is 4-hydroxy-3-methylbut-2-en-1-yl diphosphate synthase (flavodoxin).